Consider the following 227-residue polypeptide: Cytochrome c oxidase subunit 2 (227 aa).

The Mitochondrial intermembrane portion of the chain corresponds to 1-14 (MAYPLQMGLQDATS). The helical transmembrane segment at 15–45 (PIMEELLHFHDHTLMIVFLISSLVLYIISLM) threads the bilayer. Residues 46-59 (LTTKLTHTSTMDAQ) lie on the Mitochondrial matrix side of the membrane. The helical transmembrane segment at 60 to 87 (EVETVWTILPAIILILIALPSLRILYMM) threads the bilayer. Residues 88 to 227 (DEINNPSLTV…HFEKWSTSML (140 aa)) are Mitochondrial intermembrane-facing. Cu cation is bound by residues H161, C196, E198, C200, H204, and M207. E198 contributes to the Mg(2+) binding site.

Belongs to the cytochrome c oxidase subunit 2 family. As to quaternary structure, component of the cytochrome c oxidase (complex IV, CIV), a multisubunit enzyme composed of 14 subunits. The complex is composed of a catalytic core of 3 subunits MT-CO1, MT-CO2 and MT-CO3, encoded in the mitochondrial DNA, and 11 supernumerary subunits COX4I, COX5A, COX5B, COX6A, COX6B, COX6C, COX7A, COX7B, COX7C, COX8 and NDUFA4, which are encoded in the nuclear genome. The complex exists as a monomer or a dimer and forms supercomplexes (SCs) in the inner mitochondrial membrane with NADH-ubiquinone oxidoreductase (complex I, CI) and ubiquinol-cytochrome c oxidoreductase (cytochrome b-c1 complex, complex III, CIII), resulting in different assemblies (supercomplex SCI(1)III(2)IV(1) and megacomplex MCI(2)III(2)IV(2)). Found in a complex with TMEM177, COA6, COX18, COX20, SCO1 and SCO2. Interacts with TMEM177 in a COX20-dependent manner. Interacts with COX20. Interacts with COX16. Cu cation is required as a cofactor.

Its subcellular location is the mitochondrion inner membrane. It catalyses the reaction 4 Fe(II)-[cytochrome c] + O2 + 8 H(+)(in) = 4 Fe(III)-[cytochrome c] + 2 H2O + 4 H(+)(out). Component of the cytochrome c oxidase, the last enzyme in the mitochondrial electron transport chain which drives oxidative phosphorylation. The respiratory chain contains 3 multisubunit complexes succinate dehydrogenase (complex II, CII), ubiquinol-cytochrome c oxidoreductase (cytochrome b-c1 complex, complex III, CIII) and cytochrome c oxidase (complex IV, CIV), that cooperate to transfer electrons derived from NADH and succinate to molecular oxygen, creating an electrochemical gradient over the inner membrane that drives transmembrane transport and the ATP synthase. Cytochrome c oxidase is the component of the respiratory chain that catalyzes the reduction of oxygen to water. Electrons originating from reduced cytochrome c in the intermembrane space (IMS) are transferred via the dinuclear copper A center (CU(A)) of subunit 2 and heme A of subunit 1 to the active site in subunit 1, a binuclear center (BNC) formed by heme A3 and copper B (CU(B)). The BNC reduces molecular oxygen to 2 water molecules using 4 electrons from cytochrome c in the IMS and 4 protons from the mitochondrial matrix. The chain is Cytochrome c oxidase subunit 2 (MT-CO2) from Phoca vitulina (Harbor seal).